Here is a 625-residue protein sequence, read N- to C-terminus: MKREYQEAGGSSGGGSSADMGSCKDKVMAGAAGEEEDVDELLAALGYKVRSSDMADVAQKLEQLEMAMGMGGVSAPGAADDGFVSHLATDTVHYNPSDLSSWVESMLSELNAPLPPIPPAPPAARHASTSSTVTGGGGSGFFELPAAADSSSSTYALRPISLPVVATADPSAADSARDTKRMRTGGGSTSSSSSSSSSLGGGASRGSVVEAAPPAMQGAAAANAPAVPVVVVDTQEAGIRLVHALLACAEAVQQENFAAAEALVKQIPTLAASQGGAMRKVAAYFGEALARRVYRFRPADSTLLDAAFADLLHAHFYESCPYLKFAHFTANQAILEAFAGCRRVHVVDFGIKQGMQWPALLQALALRPGGPPSFRLTGVGPPQPDETDALQQVGWKLAQFAHTIRVDFQYRGLVAATLADLEPFMLQPEGEADANEEPEVIAVNSVFELHRLLAQPGALEKVLGTVHAVRPRIVTVVEQEANHNSGSFLDRFTESLHYYSTMFDSLEGGSSGQAELSPPAAGGGGGTDQVMSEVYLGRQICNVVACEGAERTERHETLGQWRNRLGRAGFEPVHLGSNAYKQASTLLALFAGGDGYRVEEKEGCLTLGWHTRPLIATSAWRVAAA.

The disordered stretch occupies residues Met1–Glu34. The short motif at Asp39 to Ala43 is the DELLA motif element. The segment at Thr167–Val208 is disordered. A compositionally biased stretch (low complexity) spans Thr189–Ser198. Positions Val232–Arg621 constitute a GRAS domain. Positions Ile239–Tyr294 are leucine repeat I (LRI). A required for possible homodimerization region spans residues Leu241–Met278. The short motif at Leu246–Glu250 is the LxCxE motif element. A VHIID region spans residues His313 to Gly378. Residues Val344 to Asp348 carry the VHIID motif. The interval Gln392–Glu431 is leucine repeat II (LRII). The tract at residues Ile441 to Asn542 is PFYRE. The LXXLL motif signature appears at Leu449–Leu453. The SAW stretch occupies residues Ala545–Arg621.

It belongs to the GRAS family. DELLA subfamily.

Probable transcriptional regulator that acts as a repressor of the gibberellin (GA) signaling pathway. Probably acts by participating in large multiprotein complexes that repress transcription of GA-inducible genes. Upon GA application, it is degraded by the proteasome, allowing the GA signaling pathway. In contrast, its overexpression prevents the GA signaling pathway and induces a dwarf phenotype. The sequence is that of DELLA protein SLR1 from Oryza sativa subsp. indica (Rice).